Reading from the N-terminus, the 321-residue chain is Lipoyl synthase (321 aa).

Positions 68, 73, 79, 94, 98, 101, and 308 each coordinate [4Fe-4S] cluster. A Radical SAM core domain is found at 80 to 297 (FNHGTATFMI…KEIALELGFT (218 aa)).

Belongs to the radical SAM superfamily. Lipoyl synthase family. Requires [4Fe-4S] cluster as cofactor.

The protein localises to the cytoplasm. The enzyme catalyses [[Fe-S] cluster scaffold protein carrying a second [4Fe-4S](2+) cluster] + N(6)-octanoyl-L-lysyl-[protein] + 2 oxidized [2Fe-2S]-[ferredoxin] + 2 S-adenosyl-L-methionine + 4 H(+) = [[Fe-S] cluster scaffold protein] + N(6)-[(R)-dihydrolipoyl]-L-lysyl-[protein] + 4 Fe(3+) + 2 hydrogen sulfide + 2 5'-deoxyadenosine + 2 L-methionine + 2 reduced [2Fe-2S]-[ferredoxin]. The protein operates within protein modification; protein lipoylation via endogenous pathway; protein N(6)-(lipoyl)lysine from octanoyl-[acyl-carrier-protein]: step 2/2. Functionally, catalyzes the radical-mediated insertion of two sulfur atoms into the C-6 and C-8 positions of the octanoyl moiety bound to the lipoyl domains of lipoate-dependent enzymes, thereby converting the octanoylated domains into lipoylated derivatives. This is Lipoyl synthase from Aliivibrio fischeri (strain ATCC 700601 / ES114) (Vibrio fischeri).